Reading from the N-terminus, the 195-residue chain is Pyridoxal 5'-phosphate synthase subunit PdxT (195 aa).

Position 46 to 48 (46 to 48 (GES)) interacts with L-glutamine. Cys78 serves as the catalytic Nucleophile. L-glutamine contacts are provided by residues Arg107 and 136-137 (IR). Catalysis depends on charge relay system residues His173 and Glu175.

It belongs to the glutaminase PdxT/SNO family. In the presence of PdxS, forms a dodecamer of heterodimers. Only shows activity in the heterodimer.

The enzyme catalyses aldehydo-D-ribose 5-phosphate + D-glyceraldehyde 3-phosphate + L-glutamine = pyridoxal 5'-phosphate + L-glutamate + phosphate + 3 H2O + H(+). The catalysed reaction is L-glutamine + H2O = L-glutamate + NH4(+). Its pathway is cofactor biosynthesis; pyridoxal 5'-phosphate biosynthesis. Catalyzes the hydrolysis of glutamine to glutamate and ammonia as part of the biosynthesis of pyridoxal 5'-phosphate. The resulting ammonia molecule is channeled to the active site of PdxS. This chain is Pyridoxal 5'-phosphate synthase subunit PdxT, found in Dehalococcoides mccartyi (strain ATCC BAA-2266 / KCTC 15142 / 195) (Dehalococcoides ethenogenes (strain 195)).